Reading from the N-terminus, the 365-residue chain is Pyruvate dehydrogenase E1 component subunit beta, mitochondrial (365 aa).

A mitochondrion-targeting transit peptide spans 1 to 24 (MLRTRLIQAASSAQRAFSTSQKAL). E85 provides a ligand contact to thiamine diphosphate. I138, A186, I187, and D189 together coordinate K(+).

It depends on thiamine diphosphate as a cofactor. Expressed in salivary glands (at protein level).

Its subcellular location is the mitochondrion matrix. It catalyses the reaction N(6)-[(R)-lipoyl]-L-lysyl-[protein] + pyruvate + H(+) = N(6)-[(R)-S(8)-acetyldihydrolipoyl]-L-lysyl-[protein] + CO2. Its function is as follows. The pyruvate dehydrogenase complex catalyzes the overall conversion of pyruvate to acetyl-CoA and CO(2). Might play a role in regulating synapse structure formation at neuromuscular junctions. Might play a role in maintenance of mitochondrial morphology. This Drosophila melanogaster (Fruit fly) protein is Pyruvate dehydrogenase E1 component subunit beta, mitochondrial.